A 169-amino-acid polypeptide reads, in one-letter code: MKPSSSNSRSKGHAKARRKTREELDQEARDRKRQKKRRGHAPGSRAAGGNTTSGSKGQNAPKDPRIGSKTPIPLGVAEKVTKQHKPKSEKPMLSPQAELELLETDERLDALLERLEAGETLSAEEQSWVDVKLDRIDELMQKLGLSYDDDEEEEEDEKQEDMMRLLRGN.

2 disordered regions span residues 1 to 99 (MKPS…QAEL) and 146 to 169 (SYDD…LRGN). Basic residues predominate over residues 10–19 (SKGHAKARRK). Over residues 20–30 (TREELDQEARD) the composition is skewed to basic and acidic residues. Residues 31–40 (RKRQKKRRGH) are compositionally biased toward basic residues. Over residues 49–58 (GNTTSGSKGQ) the composition is skewed to polar residues. Residues 147 to 159 (YDDDEEEEEDEKQ) are compositionally biased toward acidic residues. The span at 160–169 (EDMMRLLRGN) shows a compositional bias: basic and acidic residues.

It belongs to the YihI family. In terms of assembly, interacts with Der.

A GTPase-activating protein (GAP) that modifies Der/EngA GTPase function. May play a role in ribosome biogenesis. The chain is Der GTPase-activating protein YihI from Escherichia coli O81 (strain ED1a).